A 244-amino-acid polypeptide reads, in one-letter code: Nodulation protein G (244 aa).

11–35 serves as a coordination point for NAD(+); that stretch reads VTGASGAIGGAIARVLHAQGAIVGL. Ser139 serves as a coordination point for substrate. Tyr152 functions as the Proton acceptor in the catalytic mechanism.

Belongs to the short-chain dehydrogenases/reductases (SDR) family.

In terms of biological role, proposed to modify Nod factor fatty acyl chain. This Rhizobium meliloti (Ensifer meliloti) protein is Nodulation protein G (nodG).